We begin with the raw amino-acid sequence, 173 residues long: RNA pyrophosphohydrolase (173 aa).

Residues 6–149 (GFRANVGIIL…KRGVYRRALR (144 aa)) form the Nudix hydrolase domain. The Nudix box motif lies at 38–59 (GGIDEGETPLDAMYRELWEEVG).

It belongs to the Nudix hydrolase family. RppH subfamily. It depends on a divalent metal cation as a cofactor.

Its function is as follows. Accelerates the degradation of transcripts by removing pyrophosphate from the 5'-end of triphosphorylated RNA, leading to a more labile monophosphorylated state that can stimulate subsequent ribonuclease cleavage. This chain is RNA pyrophosphohydrolase, found in Psychrobacter sp. (strain PRwf-1).